The chain runs to 275 residues: ATP synthase subunit a (275 aa).

Helical transmembrane passes span arginine 46 to methionine 66, phenylalanine 104 to isoleucine 124, isoleucine 135 to lysine 155, serine 166 to isoleucine 186, methionine 204 to valine 224, isoleucine 231 to isoleucine 251, and phenylalanine 252 to alanine 272.

This sequence belongs to the ATPase A chain family. In terms of assembly, F-type ATPases have 2 components, CF(1) - the catalytic core - and CF(0) - the membrane proton channel. CF(1) has five subunits: alpha(3), beta(3), gamma(1), delta(1), epsilon(1). CF(0) has three main subunits: a(1), b(2) and c(9-12). The alpha and beta chains form an alternating ring which encloses part of the gamma chain. CF(1) is attached to CF(0) by a central stalk formed by the gamma and epsilon chains, while a peripheral stalk is formed by the delta and b chains.

It is found in the cell membrane. Its function is as follows. Key component of the proton channel; it plays a direct role in the translocation of protons across the membrane. This chain is ATP synthase subunit a, found in Rhodococcus erythropolis (strain PR4 / NBRC 100887).